A 1213-amino-acid polypeptide reads, in one-letter code: Chitin synthase 3 (1213 aa).

The interval 1–97 is disordered; sequence MSNFRDSSSP…TPPHQEEEED (97 aa). The Cytoplasmic portion of the chain corresponds to 1–168; that stretch reads MSNFRDSSSP…KPKHDIYFWK (168 aa). Residues 32–44 show a composition bias toward basic and acidic residues; the sequence is IRPERSRMDESHP. Over residues 75 to 87 the composition is skewed to polar residues; sequence ELSTSRSHLSNYA. A helical membrane pass occupies residues 169 to 189; sequence VYCYAITFWAPAPLLKLFGLP. The Extracellular segment spans residues 190–200; sequence TKDRQFAWREK. The chain crosses the membrane as a helical span at residues 201–221; the sequence is IGLISCILYVGAFVAYLTFGF. At 222 to 450 the chain is on the cytoplasmic side; sequence TKTVCSSQVV…TDTIGCIASK (229 aa). A helical membrane pass occupies residues 451–471; the sequence is VVLYMSLVFILSVVVVKFIMA. The Extracellular segment spans residues 472-1016; the sequence is CWFKWVTSRK…INSTVHNLFE (545 aa). N-linked (GlcNAc...) asparagine glycans are attached at residues N588 and N1008. A helical transmembrane segment spans residues 1017–1037; sequence LVLVKDLCGTFCFSMQFVIFI. The Cytoplasmic segment spans residues 1038–1039; that stretch reads EL. A helical transmembrane segment spans residues 1040 to 1060; it reads IGTLVLPAAITFTIYVIIVAI. At 1061-1065 the chain is on the extracellular side; that stretch reads VSKPT. The helical transmembrane segment at 1066-1086 threads the bilayer; sequence PVMSLVLLAVIFGLPGCLIVI. The Cytoplasmic portion of the chain corresponds to 1087-1213; it reads TVSSLSYLVY…LSQGSSSGSS (127 aa). Positions 1161–1213 are disordered; it reads ERRSTENRKQQQQQQLTNNSSNNLAVPGAAWDPSNTGGNLIDDLSQGSSSGSS.

This sequence belongs to the chitin synthase family. Class IV subfamily.

The protein resides in the cell membrane. It catalyses the reaction [(1-&gt;4)-N-acetyl-beta-D-glucosaminyl](n) + UDP-N-acetyl-alpha-D-glucosamine = [(1-&gt;4)-N-acetyl-beta-D-glucosaminyl](n+1) + UDP + H(+). In terms of biological role, polymerizes chitin, a structural polymer of the cell wall and septum, by transferring the sugar moiety of UDP-GlcNAc to the non-reducing end of the growing chitin polymer. This Candida albicans (Yeast) protein is Chitin synthase 3 (CHS3).